The chain runs to 352 residues: DNA polymerase IV (352 aa).

The region spanning 6-186 (IIHIDMDAFY…LPLGKIPGAG (181 aa)) is the UmuC domain. Mg(2+) is bound by residues aspartate 10 and aspartate 104. Glutamate 105 is a catalytic residue.

Belongs to the DNA polymerase type-Y family. Monomer. It depends on Mg(2+) as a cofactor.

Its subcellular location is the cytoplasm. The enzyme catalyses DNA(n) + a 2'-deoxyribonucleoside 5'-triphosphate = DNA(n+1) + diphosphate. In terms of biological role, poorly processive, error-prone DNA polymerase involved in untargeted mutagenesis. Copies undamaged DNA at stalled replication forks, which arise in vivo from mismatched or misaligned primer ends. These misaligned primers can be extended by PolIV. Exhibits no 3'-5' exonuclease (proofreading) activity. May be involved in translesional synthesis, in conjunction with the beta clamp from PolIII. In Neisseria gonorrhoeae (strain ATCC 700825 / FA 1090), this protein is DNA polymerase IV.